An 80-amino-acid chain; its full sequence is Large ribosomal subunit protein uL24 (80 aa).

It belongs to the universal ribosomal protein uL24 family. Part of the 50S ribosomal subunit.

One of two assembly initiator proteins, it binds directly to the 5'-end of the 23S rRNA, where it nucleates assembly of the 50S subunit. Functionally, one of the proteins that surrounds the polypeptide exit tunnel on the outside of the subunit. The chain is Large ribosomal subunit protein uL24 from Chlorobium phaeovibrioides (strain DSM 265 / 1930) (Prosthecochloris vibrioformis (strain DSM 265)).